The following is a 447-amino-acid chain: Chromosomal replication initiator protein DnaA (447 aa).

The domain I, interacts with DnaA modulators stretch occupies residues 1–74 (MENIEELWSA…MLLEVTGSEL (74 aa)). The segment at 74–108 (LNTKFIIPDSLEEIEEQKPMPKPKQSTDTGDSPKS) is domain II. A disordered region spans residues 85 to 107 (EEIEEQKPMPKPKQSTDTGDSPK). Over residues 97 to 107 (KQSTDTGDSPK) the composition is skewed to polar residues. Positions 109–325 (MLNSKYTFDT…GALIRVVAYS (217 aa)) are domain III, AAA+ region. Residues glycine 153, glycine 155, lysine 156, and threonine 157 each contribute to the ATP site. The domain IV, binds dsDNA stretch occupies residues 326 to 447 (SLVNQDIDAS…EELKEKLKSI (122 aa)).

It belongs to the DnaA family. In terms of assembly, oligomerizes as a right-handed, spiral filament on DNA at oriC.

The protein resides in the cytoplasm. Plays an essential role in the initiation and regulation of chromosomal replication. ATP-DnaA binds to the origin of replication (oriC) to initiate formation of the DNA replication initiation complex once per cell cycle. Binds the DnaA box (a 9 base pair repeat at the origin) and separates the double-stranded (ds)DNA. Forms a right-handed helical filament on oriC DNA; dsDNA binds to the exterior of the filament while single-stranded (ss)DNA is stabiized in the filament's interior. The ATP-DnaA-oriC complex binds and stabilizes one strand of the AT-rich DNA unwinding element (DUE), permitting loading of DNA polymerase. After initiation quickly degrades to an ADP-DnaA complex that is not apt for DNA replication. Binds acidic phospholipids. In Oceanobacillus iheyensis (strain DSM 14371 / CIP 107618 / JCM 11309 / KCTC 3954 / HTE831), this protein is Chromosomal replication initiator protein DnaA.